Consider the following 393-residue polypeptide: Pyruvate dehydrogenase E1 component subunit alpha-2, mitochondrial (393 aa).

Residues 1 to 28 (MALSRLSSRSNTFLKPAITALPSSIRRH) constitute a mitochondrion transit peptide. Residues H94, Y120, R121, G169, V171, D200, G201, A202, N229, and Y231 each coordinate pyruvate. Y120, R121, G169, V171, D200, G201, A202, and N229 together coordinate thiamine diphosphate. Mg(2+) is bound at residue D200. The Mg(2+) site is built by N229 and Y231. A thiamine diphosphate-binding site is contributed by H295.

As to quaternary structure, tetramer of 2 alpha and 2 beta subunits. Thiamine diphosphate is required as a cofactor. Requires Mg(2+) as cofactor.

It localises to the mitochondrion matrix. The catalysed reaction is N(6)-[(R)-lipoyl]-L-lysyl-[protein] + pyruvate + H(+) = N(6)-[(R)-S(8)-acetyldihydrolipoyl]-L-lysyl-[protein] + CO2. With respect to regulation, E1 activity is regulated by phosphorylation (inactivation) and dephosphorylation (activation) of the alpha subunit. In terms of biological role, the pyruvate dehydrogenase complex catalyzes the overall conversion of pyruvate to acetyl-CoA and CO(2). It contains multiple copies of three enzymatic components: pyruvate dehydrogenase (E1), dihydrolipoamide acetyltransferase (E2) and lipoamide dehydrogenase (E3). In Arabidopsis thaliana (Mouse-ear cress), this protein is Pyruvate dehydrogenase E1 component subunit alpha-2, mitochondrial (IAR4).